The sequence spans 81 residues: CLAVATA3/ESR (CLE)-related protein 12 (81 aa).

A signal peptide spans 1–31 (MENSNKVPISKIGLIMLMIFSTFFMSPHARR). A compositionally biased stretch (basic and acidic residues) spans 55 to 67 (KRSRTDLEDKAVP). The interval 55–81 (KRSRTDLEDKAVPGDRLSPGGPNHIHN) is disordered. Hydroxyproline is present on residues P73 and P76. O-linked (Ara...) hydroxyproline glycosylation is present at P76.

This sequence belongs to the CLV3/ESR signal peptide family. In terms of processing, the O-glycosylation (arabinosylation) of the hydroxyproline Pro-76 enhances binding affinity of the CLE12p peptide for its receptor. As to expression, expressed in young nodules throughout the central tissue. Expressed in the apical region of elongated nodules, corresponding to the meristematic and early infection zones.

The protein resides in the secreted. It is found in the extracellular space. In terms of biological role, signaling peptide involved in the regulation of nodulation. Moves from root to shoot to function with the receptor kinase SUNN, in a signaling pathway that plays roles during cellular differentiation, both at the onset of nodulation, and later during nodule meristem development and subsequent homeostasis. Interacts with SUNN signaling to control nodule numbers. SUNN is involved in the autoregulation of nodulation (AON), a long distance systemic signaling from root to shoot and back again, which allows legumes to limit the number of root nodules formed based on available nitrogen and previous rhizobial colonization. The chain is CLAVATA3/ESR (CLE)-related protein 12 from Medicago truncatula (Barrel medic).